The following is a 460-amino-acid chain: uncharacterized protein (460 aa).

Residues 6–64 (PVKKNSTYNLYITGMGTKGEGIGKINNFTIFVTGAILGEEVEVNIIKVNKNYAVGKLLN) enclose the TRAM domain. [4Fe-4S] cluster is bound by residues Cys-77, Cys-83, Cys-86, and Cys-163. S-adenosyl-L-methionine contacts are provided by Gln-287, Tyr-316, Glu-337, and Asp-385. Cys-412 serves as the catalytic Nucleophile.

The protein belongs to the class I-like SAM-binding methyltransferase superfamily. RNA M5U methyltransferase family.

This is an uncharacterized protein from Clostridium tetani (strain Massachusetts / E88).